The sequence spans 303 residues: Mesenteric estrogen-dependent adipogenesis protein (303 aa).

It localises to the cytoplasm. Functionally, involved in processes that promote adipocyte differentiation, lipid accumulation, and glucose uptake in mature adipocytes. In Bos taurus (Bovine), this protein is Mesenteric estrogen-dependent adipogenesis protein (MEDAG).